The sequence spans 423 residues: Oligopeptide transport ATP-binding protein OppD (423 aa).

The 286-residue stretch at I24–M309 folds into the ABC transporter domain. G58–S65 is a binding site for ATP. A disordered region spans residues A398–R423. The span at G413–R423 shows a compositional bias: basic residues.

The protein belongs to the ABC transporter superfamily. The complex is composed of two ATP-binding proteins (OppD and OppF), two transmembrane proteins (OppB and OppC) and a solute-binding protein (OppA).

Its subcellular location is the cell membrane. It carries out the reaction a [peptide](out) + ATP + H2O = a [peptide](in) + ADP + phosphate + H(+). In terms of biological role, part of the ABC transporter complex OppABCDF involved in the uptake of oligopeptides. Probably responsible for energy coupling to the transport system. This Mycoplasma pneumoniae (strain ATCC 29342 / M129 / Subtype 1) (Mycoplasmoides pneumoniae) protein is Oligopeptide transport ATP-binding protein OppD (oppD).